Here is a 91-residue protein sequence, read N- to C-terminus: Translation initiation factor IF-1 (91 aa).

Residues 1–72 enclose the S1-like domain; that stretch reads MAKEELLEFE…DRGRINFRHK (72 aa). Residues 70–91 form a disordered region; it reads RHKAEGNAPPPGARRQQNFRRR.

Belongs to the IF-1 family. In terms of assembly, component of the 30S ribosomal translation pre-initiation complex which assembles on the 30S ribosome in the order IF-2 and IF-3, IF-1 and N-formylmethionyl-tRNA(fMet); mRNA recruitment can occur at any time during PIC assembly.

It is found in the cytoplasm. In terms of biological role, one of the essential components for the initiation of protein synthesis. Stabilizes the binding of IF-2 and IF-3 on the 30S subunit to which N-formylmethionyl-tRNA(fMet) subsequently binds. Helps modulate mRNA selection, yielding the 30S pre-initiation complex (PIC). Upon addition of the 50S ribosomal subunit IF-1, IF-2 and IF-3 are released leaving the mature 70S translation initiation complex. In Azorhizobium caulinodans (strain ATCC 43989 / DSM 5975 / JCM 20966 / LMG 6465 / NBRC 14845 / NCIMB 13405 / ORS 571), this protein is Translation initiation factor IF-1.